The chain runs to 122 residues: UPF0102 protein RL0336 (122 aa).

The protein belongs to the UPF0102 family.

The sequence is that of UPF0102 protein RL0336 from Rhizobium johnstonii (strain DSM 114642 / LMG 32736 / 3841) (Rhizobium leguminosarum bv. viciae).